The sequence spans 1059 residues: Translation initiation factor IF-2 (1059 aa).

Composition is skewed to polar residues over residues Leu55–Ser75 and Lys107–Val126. 3 disordered regions span residues Leu55 to Glu81, Pro93 to Leu394, and Ser418 to Glu468. Residues Asp178–Val187 show a composition bias toward basic and acidic residues. A compositionally biased stretch (polar residues) spans Leu202 to Val211. Positions Gln216–Lys229 are enriched in basic residues. 2 stretches are compositionally biased toward basic and acidic residues: residues Asp230–Ile252 and Ser259–Val273. The span at Lys274 to Leu284 shows a compositional bias: polar residues. Basic and acidic residues-rich tracts occupy residues Lys291–Gln300 and Leu359–Trp368. Positions Ser452–Gln463 are enriched in low complexity. The 178-residue stretch at Arg556–Glu733 folds into the tr-type G domain. Positions Gly565 to Thr572 are G1. Gly565 to Thr572 lines the GTP pocket. The interval Gly590–His594 is G2. The tract at residues Asp615 to Gly618 is G3. Residues Asp615–His619 and Asn669–Asp672 each bind GTP. The segment at Asn669–Asp672 is G4. The tract at residues Ser705–Ile707 is G5.

It belongs to the TRAFAC class translation factor GTPase superfamily. Classic translation factor GTPase family. IF-2 subfamily.

It is found in the cytoplasm. One of the essential components for the initiation of protein synthesis. Protects formylmethionyl-tRNA from spontaneous hydrolysis and promotes its binding to the 30S ribosomal subunits. Also involved in the hydrolysis of GTP during the formation of the 70S ribosomal complex. The chain is Translation initiation factor IF-2 from Trichodesmium erythraeum (strain IMS101).